A 137-amino-acid chain; its full sequence is Small ribosomal subunit protein eS6 (137 aa).

The span at 114-127 (LPVEEAPAEDAPES) shows a compositional bias: acidic residues. Residues 114 to 137 (LPVEEAPAEDAPESAEEKSEDKKE) form a disordered region. Residues 128-137 (AEEKSEDKKE) are compositionally biased toward basic and acidic residues.

It belongs to the eukaryotic ribosomal protein eS6 family.

In Nitrosopumilus maritimus (strain SCM1), this protein is Small ribosomal subunit protein eS6.